A 478-amino-acid chain; its full sequence is Odorant receptor coreceptor (478 aa).

Topologically, residues 1–43 (MMKMKQQGLVADLLPNIRVMKTFGHFVFNYYNDNSSKYLHKVY) are cytoplasmic. A helical membrane pass occupies residues 44–64 (CCVNLFMLLLQFGLCAVNLIV). Residues 65 to 73 (ESADVDDLT) lie on the Extracellular side of the membrane. Residues 74–94 (ANTITLLFFTHSIVKICYFAI) form a helical membrane-spanning segment. The Cytoplasmic portion of the chain corresponds to 95–133 (RSKYFYRTWAIWNNPNSHPLFAESNARYHAIALKKMRLL). Residues 134 to 154 (LFLVGGTTMLAAVAWTVLTFF) form a helical membrane-spanning segment. Topologically, residues 155-190 (EHPIRKIVDPVTNETEIIELPQLLIRSFYPFDAGKG) are extracellular. Asn167 is a glycosylation site (N-linked (GlcNAc...) asparagine). A helical transmembrane segment spans residues 191-211 (ITHVLVLVYQFYWVLFMLIDA). Residues 212-349 (NSLDVLFCSW…IVRLVTAVGD (138 aa)) are Cytoplasmic-facing. The interval 261–281 (SADHLRDGDNPPPPPPPQSDN) is disordered. A helical membrane pass occupies residues 350–370 (AYGFALLLHMLTTTITLTLLA). Residues 371 to 382 (YQATKVNGINVY) are Extracellular-facing. Residues 383–403 (AASTIGYILYTFGQVFLFCIF) form a helical membrane-spanning segment. Over 404–454 (GNRLIEESTSVMEAAYSCHWYDGSEEAKTFVQIVCQQCQKAMSISGAKFFT) the chain is Cytoplasmic. The helical transmembrane segment at 455–475 (VSLDLFASVLGAVVTYFMVLV) threads the bilayer. Residues 476–478 (QLK) lie on the Extracellular side of the membrane.

This sequence belongs to the insect chemoreceptor superfamily. Heteromeric odorant receptor channel (TC 1.A.69) family. Orco subfamily. Heterodimer with conventional odorant receptors (ORs). As to expression, present in antennae (at protein level).

It is found in the cell membrane. Odorant coreceptor which complexes with conventional odorant receptors (ORs) to form odorant-sensing units, providing sensitive and prolonged odorant signaling and calcium permeability. Obligate coreceptor of all odorant receptors. Orco is a universal and integral part of the functional odorant receptor, involved in the dendritic localization of other olfactory receptors. Can form functional ion channels in the absence of an odor-binding odorant receptor. Plays a central role in the perception of olfactory stimuli in ants and is essential for ant social organization. Required for pheromone sensing. Also required for the development and maintenance of odorant receptor neurons (ORNs) and of antennal lobe glomeruli. In Ooceraea biroi (Clonal raider ant), this protein is Odorant receptor coreceptor.